Here is a 272-residue protein sequence, read N- to C-terminus: Endoplasmic reticulum resident protein 27 (272 aa).

A signal peptide spans 1-25 (MKITRSRCLILSFVLVCGLVPEVTA). The 114-residue stretch at 39–152 (EPIWLTDVPA…WVTEYSPMIA (114 aa)) folds into the Thioredoxin domain. 2 N-linked (GlcNAc...) asparagine glycosylation sites follow: Asn91 and Asn100. The PDIA3-binding site stretch occupies residues 230–233 (DKWD). Residues 269 to 272 (KEEL) carry the Prevents secretion from ER motif.

The protein belongs to the protein disulfide isomerase family. As to quaternary structure, interacts with PDIA3.

Its subcellular location is the endoplasmic reticulum lumen. Its function is as follows. Specifically binds unfolded proteins and may recruit protein disulfide isomerase PDIA3 to unfolded substrates. Binds protein substrates via a hydrophobic pocket in the C-terminal domain. May play a role in the unfolded stress response. This is Endoplasmic reticulum resident protein 27 (Erp27) from Mus musculus (Mouse).